We begin with the raw amino-acid sequence, 250 residues long: Octanoyltransferase (250 aa).

Residues 49 to 230 form the BPL/LPL catalytic domain; that stretch reads DEINDVILVL…ALDDAFAGRL (182 aa). Residues 87 to 94, 160 to 162, and 173 to 175 contribute to the substrate site; these read RGGRITWH, ALG, and GLA. Catalysis depends on cysteine 191, which acts as the Acyl-thioester intermediate.

This sequence belongs to the LipB family.

It localises to the cytoplasm. The catalysed reaction is octanoyl-[ACP] + L-lysyl-[protein] = N(6)-octanoyl-L-lysyl-[protein] + holo-[ACP] + H(+). It functions in the pathway protein modification; protein lipoylation via endogenous pathway; protein N(6)-(lipoyl)lysine from octanoyl-[acyl-carrier-protein]: step 1/2. In terms of biological role, catalyzes the transfer of endogenously produced octanoic acid from octanoyl-acyl-carrier-protein onto the lipoyl domains of lipoate-dependent enzymes. Lipoyl-ACP can also act as a substrate although octanoyl-ACP is likely to be the physiological substrate. The polypeptide is Octanoyltransferase (Corynebacterium diphtheriae (strain ATCC 700971 / NCTC 13129 / Biotype gravis)).